Here is a 256-residue protein sequence, read N- to C-terminus: 1-(5-phosphoribosyl)-5-[(5-phosphoribosylamino)methylideneamino] imidazole-4-carboxamide isomerase (256 aa).

Catalysis depends on Asp-8, which acts as the Proton acceptor. Asp-129 serves as the catalytic Proton donor.

It belongs to the HisA/HisF family.

The protein localises to the cytoplasm. It carries out the reaction 1-(5-phospho-beta-D-ribosyl)-5-[(5-phospho-beta-D-ribosylamino)methylideneamino]imidazole-4-carboxamide = 5-[(5-phospho-1-deoxy-D-ribulos-1-ylimino)methylamino]-1-(5-phospho-beta-D-ribosyl)imidazole-4-carboxamide. Its pathway is amino-acid biosynthesis; L-histidine biosynthesis; L-histidine from 5-phospho-alpha-D-ribose 1-diphosphate: step 4/9. The sequence is that of 1-(5-phosphoribosyl)-5-[(5-phosphoribosylamino)methylideneamino] imidazole-4-carboxamide isomerase from Picosynechococcus sp. (strain ATCC 27264 / PCC 7002 / PR-6) (Agmenellum quadruplicatum).